The following is an 823-amino-acid chain: Axial budding pattern protein 2 (823 aa).

The signal sequence occupies residues 1 to 22 (MTQLQISLLLTATISLLHLVVA). The Extracellular portion of the chain corresponds to 23 to 508 (TPYEAYPIGK…SHNKKAVAIA (486 aa)). Asn-41, Asn-50, Asn-96, Asn-117, Asn-163, Asn-260, Asn-266, Asn-304, Asn-324, Asn-359, Asn-382, Asn-389, Asn-403, Asn-447, Asn-451, and Asn-495 each carry an N-linked (GlcNAc...) asparagine glycan. The interval 447–467 (NHSANATSTRSSHHSTSTSSY) is disordered. Low complexity predominate over residues 449–467 (SANATSTRSSHHSTSTSSY). Residues 509–529 (CGVAIPLGVILVALICFLIFW) traverse the membrane as a helical segment. The Cytoplasmic segment spans residues 530–823 (RRRRENPDDE…DIHGRIPEML (294 aa)). Disordered stretches follow at residues 539 to 576 (ENLP…ASSY) and 596 to 627 (HSAT…QSQS). Composition is skewed to polar residues over residues 552 to 566 (NPAN…TPLN) and 614 to 626 (SGMN…FQSQ). Ser-642, Ser-673, and Ser-676 each carry phosphoserine. Disordered regions lie at residues 700 to 734 (PEKE…VTPS) and 751 to 771 (DSQS…SSDD). Over residues 709 to 724 (DVTMSSLDPWNSNISP) the composition is skewed to polar residues. Over residues 760–769 (TPTTMSTSSS) the composition is skewed to low complexity.

As to quaternary structure, interacts with BEM1, BUD3, BUD4, BUD5, CDC24 and CDC42. In terms of processing, O-glycosylated by PMT4 and N-glycosylated. O-glycosylation increases activity in daughter cells by enhancing stability and promoting localization to the plasma membrane. May also be O-glycosylated by PMT1 and PMT2.

The protein localises to the cell membrane. Functionally, required for haploid cells axial budding pattern. Acts as an anchor to help direct new growth components and/or polarity establishment components like the BUD5 GTP/GDP exchange factor to localize at the cortical axial budding site. Regulates septin organization in late G1 independently of its role in polarity-axis determination. The polypeptide is Axial budding pattern protein 2 (AXL2) (Saccharomyces cerevisiae (strain ATCC 204508 / S288c) (Baker's yeast)).